The chain runs to 755 residues: Tryptophan 2-monooxygenase (755 aa).

FMN-binding residues include Ser-247, Glu-267, Lys-275, and Arg-295. Arg-295 contacts substrate.

Belongs to the tryptophan 2-monooxygenase family. FMN serves as cofactor.

It catalyses the reaction L-tryptophan + O2 = indole-3-acetamide + CO2 + H2O. Its pathway is plant hormone metabolism; auxin biosynthesis. The protein is Tryptophan 2-monooxygenase (iaaM) of Agrobacterium vitis (Rhizobium vitis).